The chain runs to 565 residues: Heme/hemopexin transporter protein HuxB (565 aa).

The first 26 residues, 1 to 26 (MKMRPRYSVIASAVSLGFVLSKSVMA), serve as a signal peptide directing secretion. Residues 73-150 (FPLKQVQILD…GTVKILLLKG (78 aa)) form the POTRA domain.

This sequence belongs to the TPS (TC 1.B.20) family.

The protein localises to the cell outer membrane. In terms of biological role, likely functions in the release of soluble HxuA from the cell. Probable member of a two partner secretion pathway (TPS) in which it mediates the secretion of HuxA. The sequence is that of Heme/hemopexin transporter protein HuxB (hxuB) from Haemophilus influenzae (strain ATCC 51907 / DSM 11121 / KW20 / Rd).